Here is a 344-residue protein sequence, read N- to C-terminus: Phosphate acyltransferase (344 aa).

The protein belongs to the PlsX family. As to quaternary structure, homodimer. Probably interacts with PlsY.

The protein localises to the cytoplasm. It carries out the reaction a fatty acyl-[ACP] + phosphate = an acyl phosphate + holo-[ACP]. The protein operates within lipid metabolism; phospholipid metabolism. In terms of biological role, catalyzes the reversible formation of acyl-phosphate (acyl-PO(4)) from acyl-[acyl-carrier-protein] (acyl-ACP). This enzyme utilizes acyl-ACP as fatty acyl donor, but not acyl-CoA. The sequence is that of Phosphate acyltransferase from Actinobacillus pleuropneumoniae serotype 5b (strain L20).